The sequence spans 227 residues: Leucyl/phenylalanyl-tRNA--protein transferase (227 aa).

It belongs to the L/F-transferase family.

It is found in the cytoplasm. The enzyme catalyses N-terminal L-lysyl-[protein] + L-leucyl-tRNA(Leu) = N-terminal L-leucyl-L-lysyl-[protein] + tRNA(Leu) + H(+). The catalysed reaction is N-terminal L-arginyl-[protein] + L-leucyl-tRNA(Leu) = N-terminal L-leucyl-L-arginyl-[protein] + tRNA(Leu) + H(+). It catalyses the reaction L-phenylalanyl-tRNA(Phe) + an N-terminal L-alpha-aminoacyl-[protein] = an N-terminal L-phenylalanyl-L-alpha-aminoacyl-[protein] + tRNA(Phe). In terms of biological role, functions in the N-end rule pathway of protein degradation where it conjugates Leu, Phe and, less efficiently, Met from aminoacyl-tRNAs to the N-termini of proteins containing an N-terminal arginine or lysine. The protein is Leucyl/phenylalanyl-tRNA--protein transferase of Afipia carboxidovorans (strain ATCC 49405 / DSM 1227 / KCTC 32145 / OM5) (Oligotropha carboxidovorans).